The primary structure comprises 414 residues: Serine-type anaerobic sulfatase-maturating enzyme (414 aa).

The region spanning 5–250 is the Radical SAM core domain; sequence TYAPFAKPLY…LCTIFDEWVK (246 aa). 2 residues coordinate [4Fe-4S] cluster: Cys24 and Cys28. Position 30 (Tyr30) interacts with S-adenosyl-L-methionine. Residue Cys31 coordinates [4Fe-4S] cluster. Residues Gly76, Ser131, and Arg143 each coordinate S-adenosyl-L-methionine. [4Fe-4S] cluster contacts are provided by Cys276, Cys282, and Cys297. Catalysis depends on Asp298, which acts as the Proton acceptor. [4Fe-4S] cluster is bound by residues Cys339, Cys342, Cys348, Cys352, and Cys371.

It belongs to the radical SAM superfamily. Anaerobic sulfatase-maturating enzyme family. It depends on [4Fe-4S] cluster as a cofactor.

The catalysed reaction is L-seryl-[sulfatase] + S-adenosyl-L-methionine = 3-oxo-L-alanyl-[sulfatase] + 5'-deoxyadenosine + L-methionine + H(+). The protein operates within protein modification; sulfatase oxidation. In terms of biological role, involved in 'Ser-type' sulfatase maturation under anaerobic conditions. Links the heparin and the chondroitin sulfate utilization pathways which contribute to the colonization of the intestinal tract. May catalyze the activation of chondro-6-sulfatase, i.e. the post-translational modification of a specific serine residue into 3-oxoalanine (also known as C(alpha)-formylglycine (FGly)), by a free radical chemical mechanism initiated via the reductive cleavage of S-adenosyl-L-methionine (SAM). Is also able to oxidize a cysteine residue in a synthetic substrate to FGly in vitro, but not in a recombinant Cys-type sulfatase in vivo. But since B.thetaiotaomicron possesses only Ser-type sulfatases, the oxidation of serine residues to FGly is the sole physiological activity. The polypeptide is Serine-type anaerobic sulfatase-maturating enzyme (chuR) (Bacteroides thetaiotaomicron (strain ATCC 29148 / DSM 2079 / JCM 5827 / CCUG 10774 / NCTC 10582 / VPI-5482 / E50)).